The primary structure comprises 362 residues: UDP-N-acetylglucosamine--N-acetylmuramyl-(pentapeptide) pyrophosphoryl-undecaprenol N-acetylglucosamine transferase (362 aa).

UDP-N-acetyl-alpha-D-glucosamine contacts are provided by residues 11 to 13 (TGG), Asn-124, Arg-163, Ser-191, Ile-246, and Gln-291.

Belongs to the glycosyltransferase 28 family. MurG subfamily.

The protein resides in the cell inner membrane. The catalysed reaction is di-trans,octa-cis-undecaprenyl diphospho-N-acetyl-alpha-D-muramoyl-L-alanyl-D-glutamyl-meso-2,6-diaminopimeloyl-D-alanyl-D-alanine + UDP-N-acetyl-alpha-D-glucosamine = di-trans,octa-cis-undecaprenyl diphospho-[N-acetyl-alpha-D-glucosaminyl-(1-&gt;4)]-N-acetyl-alpha-D-muramoyl-L-alanyl-D-glutamyl-meso-2,6-diaminopimeloyl-D-alanyl-D-alanine + UDP + H(+). It participates in cell wall biogenesis; peptidoglycan biosynthesis. Functionally, cell wall formation. Catalyzes the transfer of a GlcNAc subunit on undecaprenyl-pyrophosphoryl-MurNAc-pentapeptide (lipid intermediate I) to form undecaprenyl-pyrophosphoryl-MurNAc-(pentapeptide)GlcNAc (lipid intermediate II). The chain is UDP-N-acetylglucosamine--N-acetylmuramyl-(pentapeptide) pyrophosphoryl-undecaprenol N-acetylglucosamine transferase from Idiomarina loihiensis (strain ATCC BAA-735 / DSM 15497 / L2-TR).